A 296-amino-acid polypeptide reads, in one-letter code: Fructose-bisphosphate aldolase class 1 (296 aa).

The active-site Proton acceptor is Glu175. Lys212 (schiff-base intermediate with dihydroxyacetone-P) is an active-site residue.

It belongs to the class I fructose-bisphosphate aldolase family.

It carries out the reaction beta-D-fructose 1,6-bisphosphate = D-glyceraldehyde 3-phosphate + dihydroxyacetone phosphate. It participates in carbohydrate degradation; glycolysis; D-glyceraldehyde 3-phosphate and glycerone phosphate from D-glucose: step 4/4. In Staphylococcus epidermidis (strain ATCC 35984 / DSM 28319 / BCRC 17069 / CCUG 31568 / BM 3577 / RP62A), this protein is Fructose-bisphosphate aldolase class 1.